A 241-amino-acid chain; its full sequence is Chaperone protein HifB (241 aa).

An N-terminal signal peptide occupies residues 1-27 (MGKTMFKKTLLFFTALFFTALCAFSAN).

The protein belongs to the periplasmic pilus chaperone family.

The protein localises to the periplasm. Mediates assembly of pili by forming soluble multimeric complexes with pili subunits as an intermediate step in the assembly process. This protein is involved in type B pili (HifA) assembly. In Haemophilus influenzae, this protein is Chaperone protein HifB (hifB).